The sequence spans 168 residues: NADH-ubiquinone oxidoreductase chain 6 (168 aa).

The next 5 membrane-spanning stretches (helical) occupy residues 1–21 (MKMM…VAFA), 27–47 (IYGG…VVSL), 50–70 (VFLG…VFGY), 87–107 (VVAF…YFMS), and 143–163 (WALA…LEVV).

This sequence belongs to the complex I subunit 6 family. In terms of assembly, core subunit of respiratory chain NADH dehydrogenase (Complex I) which is composed of 45 different subunits.

The protein resides in the mitochondrion inner membrane. The enzyme catalyses a ubiquinone + NADH + 5 H(+)(in) = a ubiquinol + NAD(+) + 4 H(+)(out). Its function is as follows. Core subunit of the mitochondrial membrane respiratory chain NADH dehydrogenase (Complex I) which catalyzes electron transfer from NADH through the respiratory chain, using ubiquinone as an electron acceptor. Essential for the catalytic activity and assembly of complex I. The sequence is that of NADH-ubiquinone oxidoreductase chain 6 (MT-ND6) from Didelphis virginiana (North American opossum).